We begin with the raw amino-acid sequence, 258 residues long: 5'-nucleotidase SurE (258 aa).

A divalent metal cation-binding residues include aspartate 9, aspartate 10, serine 42, and asparagine 96.

Belongs to the SurE nucleotidase family. It depends on a divalent metal cation as a cofactor.

It localises to the cytoplasm. It catalyses the reaction a ribonucleoside 5'-phosphate + H2O = a ribonucleoside + phosphate. Functionally, nucleotidase that shows phosphatase activity on nucleoside 5'-monophosphates. In Campylobacter jejuni subsp. jejuni serotype O:23/36 (strain 81-176), this protein is 5'-nucleotidase SurE.